Reading from the N-terminus, the 293-residue chain is Exosome complex component RRP4 (293 aa).

The 81-residue stretch at 79–159 folds into the S1 motif domain; sequence EVGDIVVGRI…SDGAVSLHTR (81 aa). The residue at position 124 (Ser-124) is a Phosphoserine.

This sequence belongs to the RRP4 family. In terms of assembly, component of the RNA exosome core complex (Exo-9), composed of EXOSC1, EXOSC2, EXOSC3, EXOSC4, EXOSC5, EXOSC6, EXOSC7, EXOSC8 and EXOSC9; within the complex interacts with EXOSC4 and EXOSC7. The catalytically inactive RNA exosome core complex (Exo-9) associates with the catalytic subunit EXOSC10/RRP6. Exo-9 may associate with DIS3 to form the nucleolar exosome complex, or DIS3L to form the cytoplasmic exosome complex. Exo-9 is formed by a hexameric base ring consisting of the heterodimers EXOSC4-EXOSC9, EXOSC5-EXOSC8 and EXOSC6-EXOSC7, and a cap ring consisting of EXOSC1, EXOSC2 and EXOSC3. The RNA exosome complex associates with cofactors C1D/RRP47, MPHOSPH6/MPP6 and MTREX/MTR4. Interacts with GTPBP1. Interacts with ZFP36L1 (via N-terminus).

Its subcellular location is the cytoplasm. It localises to the nucleus. It is found in the nucleolus. Functionally, non-catalytic component of the RNA exosome complex which has 3'-&gt;5' exoribonuclease activity and participates in a multitude of cellular RNA processing and degradation events. In the nucleus, the RNA exosome complex is involved in proper maturation of stable RNA species such as rRNA, snRNA and snoRNA, in the elimination of RNA processing by-products and non-coding 'pervasive' transcripts, such as antisense RNA species and promoter-upstream transcripts (PROMPTs), and of mRNAs with processing defects, thereby limiting or excluding their export to the cytoplasm. The RNA exosome may be involved in Ig class switch recombination (CSR) and/or Ig variable region somatic hypermutation (SHM) by targeting AICDA deamination activity to transcribed dsDNA substrates. In the cytoplasm, the RNA exosome complex is involved in general mRNA turnover and specifically degrades inherently unstable mRNAs containing AU-rich elements (AREs) within their 3' untranslated regions, and in RNA surveillance pathways, preventing translation of aberrant mRNAs. It seems to be involved in degradation of histone mRNA. The catalytic inactive RNA exosome core complex of 9 subunits (Exo-9) is proposed to play a pivotal role in the binding and presentation of RNA for ribonucleolysis, and to serve as a scaffold for the association with catalytic subunits and accessory proteins or complexes. EXOSC2 as peripheral part of the Exo-9 complex stabilizes the hexameric ring of RNase PH-domain subunits through contacts with EXOSC4 and EXOSC7. The polypeptide is Exosome complex component RRP4 (Homo sapiens (Human)).